A 142-amino-acid chain; its full sequence is MAKKVQAYVKLQVAAGMANPSPPVGPALGQQGVNIMEFCKAFNAKTDSIEKGLPIPVVITVYADRSFTFVTKTPPAAVLLKKAAGIKSGSGKPNKDKVGKISRAQLQQIAQTKAADMTGADIEAMTRSIEGTARSMGLVVED.

N,N,N-trimethylalanine is present on alanine 2. N6,N6,N6-trimethyllysine occurs at positions 4 and 40.

The protein belongs to the universal ribosomal protein uL11 family. In terms of assembly, part of the ribosomal stalk of the 50S ribosomal subunit. Interacts with L10 and the large rRNA to form the base of the stalk. L10 forms an elongated spine to which L12 dimers bind in a sequential fashion forming a multimeric L10(L12)X complex. One or more lysine residues are methylated.

In terms of biological role, forms part of the ribosomal stalk which helps the ribosome interact with GTP-bound translation factors. This chain is Large ribosomal subunit protein uL11, found in Shigella flexneri.